Reading from the N-terminus, the 1227-residue chain is RNA-binding protein 20 (1227 aa).

Disordered stretches follow at residues 1-58 and 289-374; these read MVLA…QAGL and GSHV…SKQG. The segment covering 27–42 has biased composition (low complexity); that stretch reads PGARASPAPSGPRGMQ. The segment covering 43–56 has biased composition (pro residues); it reads QPPPPPQPPPPPQA. Polar residues predominate over residues 313–331; the sequence is QGTNSQWESPHGFSGQSKP. A U1-type zinc finger spans residues 409 to 443; the sequence is HLPHICSICDKKVFDLKDWELHVKGKLHAQKCLVF. Residue Ser-498 is modified to Phosphoserine. The 76-residue stretch at 518–593 folds into the RRM domain; it reads RVVHICNLPE…EKLLIRMSKR (76 aa). A compositionally biased stretch (basic and acidic residues) spans 624-634; it reads EADRYGPERPR. 2 disordered regions span residues 624–906 and 977–1089; these read EADR…TNME and SLKS…ASPP. The RS stretch occupies residues 628-655; it reads YGPERPRSRSPVSRSLSPRSHTPSFTSC. 6 positions are modified to phosphoserine: Ser-635, Ser-637, Ser-640, Ser-642, Ser-660, and Ser-679. A compositionally biased stretch (low complexity) spans 636 to 660; it reads RSPVSRSLSPRSHTPSFTSCSSSHS. Composition is skewed to basic and acidic residues over residues 674–709 and 716–738; these read DSWEHSPYARREEERDPAPWRDNGDDKRDRMDPWAH and RQLDKAELDERPEGGRPHREKYP. The span at 741 to 752 shows a compositional bias: polar residues; the sequence is GSPNLPHSVSSY. Ser-742 bears the Phosphoserine mark. 3 stretches are compositionally biased toward basic and acidic residues: residues 753 to 772, 784 to 807, and 816 to 856; these read KSREDGYYRKEPKAKSDKYL, RKDEARLRESRHPHPDDSGKEDGL, and EGAK…KEEQ. Ser-801 is modified (phosphoserine). 7 positions are modified to phosphoserine: Ser-865, Ser-876, Ser-891, Ser-893, Ser-977, Ser-980, and Ser-1013. Residues 868–888 show a composition bias toward basic and acidic residues; that stretch reads RQEKEAEFSDPENTRTKKEQD. Basic and acidic residues predominate over residues 1024-1036; it reads CYEKEAKGVESSD. Phosphoserine is present on residues Ser-1048, Ser-1060, Ser-1080, Ser-1115, and Ser-1120. The Matrin-type zinc finger occupies 1161-1192; sequence FYCKLCGLFYTSEETAKMSHCRSAVHYRNLQK. Positions 1201-1215 are enriched in basic and acidic residues; sequence GLKETEGADSPRPED. The segment at 1201–1227 is disordered; sequence GLKETEGADSPRPEDSGIVPRFERKKL. Ser-1210 is modified (phosphoserine).

In terms of assembly, associates with components of the U1 and U2 U1 small nuclear ribonucleoprotein complexes. Post-translationally, phosphorylation regulates the subcellular localization. Phosphorylation of Ser-635 and Ser-637 in the RS (arginine/serine-rich) region promotes nuclear localization of the protein. In contrast, phosphorylation of the C-terminal disordered region promotes localization to cytoplasmic ribonucleoprotein granules. As to expression, mainly expressed in the heart. Also expressed in skeletal muscle tissues, ovary, small intestine and colon.

It localises to the nucleus. The protein localises to the cytoplasm. The protein resides in the cytoplasmic ribonucleoprotein granule. Its function is as follows. RNA-binding protein that acts as a regulator of mRNA splicing of a subset of genes encoding key structural proteins involved in cardiac development, such as TTN (Titin), CACNA1C, CAMK2D or PDLIM5/ENH. Acts as a repressor of mRNA splicing: specifically binds the 5'UCUU-3' motif that is predominantly found within intronic sequences of pre-mRNAs, leading to the exclusion of specific exons in target transcripts. RBM20-mediated exon skipping is hormone-dependent and is essential for TTN isoform transition in both cardiac and skeletal muscles. RBM20-mediated exon skipping of TTN provides substrates for the formation of circular RNA (circRNAs) from the TTN transcripts. Together with RBM24, promotes the expression of short isoforms of PDLIM5/ENH in cardiomyocytes. In Homo sapiens (Human), this protein is RNA-binding protein 20.